Consider the following 616-residue polypeptide: Xaa-Pro aminopeptidase app-1 (616 aa).

A peptide is bound by residues Arg78 and His392. Asp413, Asp424, and His487 together coordinate Zn(2+). Residues His487, His496, and Glu522 each contribute to the a peptide site. Zn(2+) is bound by residues Glu522 and Glu536.

This sequence belongs to the peptidase M24B family. In terms of assembly, homodimer. May interact with pid-2, pid-4 and pid-5. It depends on Zn(2+) as a cofactor. Specifically expressed in the intestine.

The protein localises to the cytoplasm. It catalyses the reaction Release of any N-terminal amino acid, including proline, that is linked to proline, even from a dipeptide or tripeptide.. With respect to regulation, strongly inhibited by the metal ion chelators EDTA and 1,10-phenanthroline. Also inhibited by apstatin. Activity towards bradykinin is inhibited by Mn(2+) and Zn(2+) at all concentrations tested, whereas Co(2+) is inhibitory at concentrations above 100 uM and activatory at 10 uM. Catalyzes the removal of a penultimate prolyl residue from the N-termini of peptides, such as Arg-Pro-Pro. Has activity towards the flp-9 neuropeptide KPSFVRF-amide. This chain is Xaa-Pro aminopeptidase app-1, found in Caenorhabditis elegans.